A 119-amino-acid polypeptide reads, in one-letter code: Large ribosomal subunit protein bL20 (119 aa).

It belongs to the bacterial ribosomal protein bL20 family.

Its function is as follows. Binds directly to 23S ribosomal RNA and is necessary for the in vitro assembly process of the 50S ribosomal subunit. It is not involved in the protein synthesizing functions of that subunit. The chain is Large ribosomal subunit protein bL20 from Xanthomonas campestris pv. campestris (strain 8004).